A 312-amino-acid polypeptide reads, in one-letter code: Methionyl-tRNA formyltransferase (312 aa).

112–115 (SLLP) serves as a coordination point for (6S)-5,6,7,8-tetrahydrofolate.

This sequence belongs to the Fmt family.

It catalyses the reaction L-methionyl-tRNA(fMet) + (6R)-10-formyltetrahydrofolate = N-formyl-L-methionyl-tRNA(fMet) + (6S)-5,6,7,8-tetrahydrofolate + H(+). In terms of biological role, attaches a formyl group to the free amino group of methionyl-tRNA(fMet). The formyl group appears to play a dual role in the initiator identity of N-formylmethionyl-tRNA by promoting its recognition by IF2 and preventing the misappropriation of this tRNA by the elongation apparatus. This is Methionyl-tRNA formyltransferase from Dehalococcoides mccartyi (strain CBDB1).